The primary structure comprises 279 residues: 5'-nucleotidase SurE (279 aa).

Residues aspartate 28, aspartate 29, serine 59, and asparagine 113 each coordinate a divalent metal cation.

The protein belongs to the SurE nucleotidase family. It depends on a divalent metal cation as a cofactor.

It localises to the cytoplasm. It carries out the reaction a ribonucleoside 5'-phosphate + H2O = a ribonucleoside + phosphate. Functionally, nucleotidase that shows phosphatase activity on nucleoside 5'-monophosphates. The sequence is that of 5'-nucleotidase SurE from Methanospirillum hungatei JF-1 (strain ATCC 27890 / DSM 864 / NBRC 100397 / JF-1).